The chain runs to 242 residues: Aliphatic sulfonates import ATP-binding protein SsuB 1 (242 aa).

Residues Val11 to Leu227 enclose the ABC transporter domain. Gly43–Thr50 serves as a coordination point for ATP.

Belongs to the ABC transporter superfamily. Aliphatic sulfonates importer (TC 3.A.1.17.2) family. The complex is composed of two ATP-binding proteins (SsuB), two transmembrane proteins (SsuC) and a solute-binding protein (SsuA).

It is found in the cell inner membrane. It carries out the reaction ATP + H2O + aliphatic sulfonate-[sulfonate-binding protein]Side 1 = ADP + phosphate + aliphatic sulfonateSide 2 + [sulfonate-binding protein]Side 1.. Part of the ABC transporter complex SsuABC involved in aliphatic sulfonates import. Responsible for energy coupling to the transport system. The sequence is that of Aliphatic sulfonates import ATP-binding protein SsuB 1 from Paracoccus denitrificans (strain Pd 1222).